The following is a 172-amino-acid chain: Shikimate kinase (172 aa).

An ATP-binding site is contributed by 11 to 16 (GAGKST). A Mg(2+)-binding site is contributed by Ser15. Substrate contacts are provided by Asp33, Arg57, and Gly79. Arg117 provides a ligand contact to ATP. Arg136 is a binding site for substrate. Arg153 is a binding site for ATP.

This sequence belongs to the shikimate kinase family. As to quaternary structure, monomer. Requires Mg(2+) as cofactor.

It localises to the cytoplasm. The enzyme catalyses shikimate + ATP = 3-phosphoshikimate + ADP + H(+). Its pathway is metabolic intermediate biosynthesis; chorismate biosynthesis; chorismate from D-erythrose 4-phosphate and phosphoenolpyruvate: step 5/7. Its function is as follows. Catalyzes the specific phosphorylation of the 3-hydroxyl group of shikimic acid using ATP as a cosubstrate. This chain is Shikimate kinase, found in Pseudomonas entomophila (strain L48).